A 316-amino-acid polypeptide reads, in one-letter code: Pantothenate kinase (316 aa).

95–102 (GSVAVGKS) contacts ATP.

It belongs to the prokaryotic pantothenate kinase family.

The protein resides in the cytoplasm. It carries out the reaction (R)-pantothenate + ATP = (R)-4'-phosphopantothenate + ADP + H(+). Its pathway is cofactor biosynthesis; coenzyme A biosynthesis; CoA from (R)-pantothenate: step 1/5. The sequence is that of Pantothenate kinase from Cronobacter sakazakii (strain ATCC BAA-894) (Enterobacter sakazakii).